Consider the following 3655-residue polypeptide: NuA4 acetyltransferase complex subunit Tra2 (3655 aa).

Residues 8–2459 are HEAT; the sequence is SLSSSIELLK…REYHIRLLGK (2452 aa). HEAT repeat units follow at residues 46 to 89, 94 to 131, 149 to 188, 230 to 268, 300 to 338, 374 to 412, 438 to 475, 606 to 643, 644 to 683, 735 to 772, 783 to 820, 828 to 867, 1100 to 1141, 1147 to 1184, 1193 to 1230, 1429 to 1470, 1665 to 1704, 1709 to 1746, 1753 to 1790, 1808 to 1846, 1891 to 1934, 1973 to 2011, 2036 to 2073, 2120 to 2157, 2183 to 2221, and 2401 to 2438; these read QLYA…CAHR, QYAQSCVLSFISLIKADNEEVAVFCLKVIMDIFKTFKF, TNLPYLIPSIFVENPKSNEEENTTLAFGSYLSTETSIIQQ, PGVQAIIPCFLKMVQIDVPIDIASYAMIEKDSSIDFIEF, LSEKDIIPDIVIKLLRRCPFDMCFARKELLVATRHILST, STLADLLHHVRDELNETQIRKSIMIYSTNMHDLTLSIGL, FLLLSIFDSFVNKFSELNDSLDQFFKKKYEEEIKETKS, IFLKVFETNLPTFFDQLKKNLTLFHIPQFLLSNESTSS, KFLNILLRFLLSRIEELGSSDIRHGSVLLRLFRLSFVTVS, SLYKEVMPLLHALLEAFNSLLISARTPKEKDLFTELCL, PYMSYLMRPLVMSLKSSQELVSQGLRTFELCLDNLTPD, PYIEDLMNALWSHLQPLPYNYNHSHTALKILGKLGGRNRK, AFIL…QDHS, DRQVDILTALFFTLKDTTSEVPTVCKDHVMDVLKQLFR, EIAPGILGHLVLELSNHNSVVRSSTQKLLSLLSELSNT, RKLL…LFHL, NLVSDLTAHLVKKIEEPDLENNVKLILNLILSKDYGFLLK, GILLTYLNQNVSSLEKCNQIFSIFYEVFFQHPSTNVYA, IGALQIISFFLKNVPEITVQHQTEMLKMCSLFGNSEDV, QFPYELVNVVYMALLKSSPIEVRHLVKSSFDNIFSYIFS, EHRG…WNDL, SEAISLLERLLSSGTWASLGMKLSFFTKSITHFDATDAN, ENLSDLKFLLEKSLENESVGVQSAIGNFVSTILTLSNT, DALHTLLPGFMRCFHKVAKEFLSLGSQPSGNSLNLQIV, DQRRWFLSALVQIIEKSSSYEICNYLLEIVRGWIMNSPV, and DFVLPVLSLQFSNSKIAEYLWRDFFNASVCSFTKDEIP. Residues 2460–3655 are head; it reads TPNVLETILT…QMDQLWQAWL (1196 aa). Residues 2484–3045 enclose the FAT domain; sequence LLVYLSKTYG…HFQLRTAYED (562 aa). The segment at 3059 to 3105 is disordered; the sequence is RGNSRLRENDSSSDNKSKDLSPSGSFSSVSQFNSKNGSPSSIDSSEK. Residues 3063-3077 are compositionally biased toward basic and acidic residues; that stretch reads RLRENDSSSDNKSKD. Over residues 3078–3092 the composition is skewed to low complexity; that stretch reads LSPSGSFSSVSQFNS. The region spanning 3285–3625 is the PI3K/PI4K catalytic domain; the sequence is VPNVDLVRGH…VISHNVPEDL (341 aa). The interval 3291–3297 is G-loop; the sequence is VRGHTMC. Residues 3491 to 3499 form a catalytic loop region; that stretch reads NIGGRSPQK. The segment at 3511-3536 is activation loop; sequence SQDLLPSMTSNQPVFHNTEAVPFRLT. One can recognise an FATC domain in the interval 3623–3655; sequence EDLPLNQTLVDLVSQATNPQQLAQMDQLWQAWL.

Belongs to the PI3/PI4-kinase family. TRA1 subfamily. In terms of assembly, component of the NuA4 acetyltransferase complex. Tra1 is the scaffold subunit for binding to a variety of transcription activators or transcription factors to recruit NuA4 for targeted gene activation. Requires Hsp90 and its co-chaperone, the Triple-T complex (TTT), for its incorporation into NuA4. Interacts with tel2.

Functionally, component of the NuA4 histone H4/H2A acetyltransferase involved in transcription and DNA repair. The polypeptide is NuA4 acetyltransferase complex subunit Tra2 (Schizosaccharomyces pombe (strain 972 / ATCC 24843) (Fission yeast)).